Consider the following 236-residue polypeptide: Small ribosomal subunit protein eS6 (236 aa).

Phosphoserine is present on residues Ser232 and Ser233.

It belongs to the eukaryotic ribosomal protein eS6 family. Post-translationally, phosphorylated.

This is Small ribosomal subunit protein eS6 (RPS6) from Kluyveromyces lactis (strain ATCC 8585 / CBS 2359 / DSM 70799 / NBRC 1267 / NRRL Y-1140 / WM37) (Yeast).